Reading from the N-terminus, the 249-residue chain is Methyl-coenzyme M reductase subunit gamma (249 aa).

Residues 43–62 (RAPGEEYPSVHPPLEELDEP) form a disordered region. R120 lines the coenzyme M pocket.

The protein belongs to the methyl-coenzyme M reductase gamma subunit family. MCR is a hexamer of two alpha, two beta, and two gamma chains, forming a dimer of heterotrimers. Requires coenzyme F430 as cofactor.

The protein localises to the cytoplasm. It catalyses the reaction coenzyme B + methyl-coenzyme M = methane + coenzyme M-coenzyme B heterodisulfide. It functions in the pathway one-carbon metabolism; methyl-coenzyme M reduction; methane from methyl-coenzyme M: step 1/1. Component of the methyl-coenzyme M reductase (MCR) I that catalyzes the reductive cleavage of methyl-coenzyme M (CoM-S-CH3 or 2-(methylthio)ethanesulfonate) using coenzyme B (CoB or 7-mercaptoheptanoylthreonine phosphate) as reductant which results in the production of methane and the mixed heterodisulfide of CoB and CoM (CoM-S-S-CoB). This is the final step in methanogenesis. The sequence is that of Methyl-coenzyme M reductase subunit gamma (mcrG) from Methanothermus fervidus.